Consider the following 254-residue polypeptide: Protein GVQW3 (254 aa).

The polypeptide is Protein GVQW3 (Homo sapiens (Human)).